A 750-amino-acid chain; its full sequence is Photosystem I P700 chlorophyll a apoprotein A1 (750 aa).

The next 8 membrane-spanning stretches (helical) occupy residues 70–93 (VFSAHFGQLSIIFLWLSGMYFHGA), 156–179 (LYCTAIGALVFAALMLFAGWFHYH), 195–219 (LNHHLAGLLGLGSLSWAGHQVHVSL), 291–309 (IAHHHLAIAILFLIAGHMY), 346–369 (WHAQLSLNLAMLGSSTIVVAHHMY), 385–411 (LSLFTHHMWIGGFLIVGAAAHAAIFMV), 433–455 (AIISHLNWACIFLGFHSFGLYIH), and 531–549 (FLVHHIHAFTIHVTVLILL). [4Fe-4S] cluster-binding residues include cysteine 573 and cysteine 582. The next 2 membrane-spanning stretches (helical) occupy residues 589 to 610 (HVFLGLFWMYNAISVVIFHFSW) and 664 to 686 (LSAYGLFFLGAHFVWAFSLMFLF). Histidine 675 provides a ligand contact to chlorophyll a'. Residues methionine 683 and tyrosine 691 each coordinate chlorophyll a. Phylloquinone is bound at residue tryptophan 692. A helical transmembrane segment spans residues 724 to 744 (AVGVTHYLLGGIATTWAFFLA).

The protein belongs to the PsaA/PsaB family. As to quaternary structure, the PsaA/B heterodimer binds the P700 chlorophyll special pair and subsequent electron acceptors. PSI consists of a core antenna complex that captures photons, and an electron transfer chain that converts photonic excitation into a charge separation. The eukaryotic PSI reaction center is composed of at least 11 subunits. P700 is a chlorophyll a/chlorophyll a' dimer, A0 is one or more chlorophyll a, A1 is one or both phylloquinones and FX is a shared 4Fe-4S iron-sulfur center. is required as a cofactor.

It localises to the plastid. Its subcellular location is the chloroplast thylakoid membrane. It carries out the reaction reduced [plastocyanin] + hnu + oxidized [2Fe-2S]-[ferredoxin] = oxidized [plastocyanin] + reduced [2Fe-2S]-[ferredoxin]. Functionally, psaA and PsaB bind P700, the primary electron donor of photosystem I (PSI), as well as the electron acceptors A0, A1 and FX. PSI is a plastocyanin-ferredoxin oxidoreductase, converting photonic excitation into a charge separation, which transfers an electron from the donor P700 chlorophyll pair to the spectroscopically characterized acceptors A0, A1, FX, FA and FB in turn. Oxidized P700 is reduced on the lumenal side of the thylakoid membrane by plastocyanin. This is Photosystem I P700 chlorophyll a apoprotein A1 from Liriodendron tulipifera (Tuliptree).